Here is a 141-residue protein sequence, read N- to C-terminus: Subtilase cytotoxin subunit B (141 aa).

Residues 1–23 (MTIKRFFVCAGIMGCLSLNPAMA) form the signal peptide. Residues 33 to 35 (MFS) and Gln-59 each bind N-glycoloyl-alpha-neuraminate. Residues 89–94 (YFYTTG) are hydrophobic patch important for binding to SubA. Tyr-101 contacts N-glycoloyl-alpha-neuraminate.

In terms of assembly, forms a complex with SubA with the stoichiometry SubA1:SubB5 (called SubAB5). Each SubB subunit makes different contacts with the single SubA subunit. This subunit alone forms pentamers.

The protein localises to the secreted. It localises to the host cytoplasm. Its subcellular location is the host cytosol. The protein resides in the host endoplasmic reticulum lumen. Its function is as follows. Receptor-binding subunit of subtilase cytotoxin SubAB5. Required for receptor-binding and thus correct trafficking in the host cell. Has specificity for host glycans terminating in the sialic acid N-glycolyl-alpha-neuraminic acid (Neu5Gc); each subunit in the SubB pentamer binds one Neu5Gc. The protease subunit (SubA) cleaves host BiP/HSPA5, inducing the host endoplasmic reticulum stress response and eventual cell death. Culture supernatant of E.coli expressing both subA and subB are toxic for Vero cells (African green monkey kidney cell line), Chinese hamster ovary cells and Hct-8 cells (human colonic epithelial cell line); the subunits are not toxic individually. Purified SubAB5 is highly toxic, &lt;0.1 pg is able to kill at least 50% of 30'000 Vero cells in a microtiter plate assay after 3 days; no cytotoxicity is seen at 24 hours. Preabsorption with cells expressing a ganglioside GM2 mimic reduced cytotoxicity of SubAB5 by 93% in the Vero cytotoxicity assay. Intraperitoneal injection of 200 ng of purified SubAB5 kills mice; the higher the dose the faster the mice die. Animals injected with purified SubAB5 have microvascular thrombi in the brain and other organs, including the renal tubules and glomeruli. Mice fed E.coli cells expressing cloned SubAB5 experience drastic weight loss and appear ill and lethargic. SubB alone at 2.5 ug/ml causes vacuolation of Vero cells, which requires the V-type ATPase proton pump; treated cells die. Protein synthesis in Vero cells is transiently inhibited by SubAB5; both subunits are required for this effect. Inhibition of protein synthesis is prevented by brefeldin A; cells are arrested in the G1 phase. SubAB5 at 100 ng/ml induced caspase-dependent apoptosis in Vero cells through mitochondrial membrane damage. The sequence is that of Subtilase cytotoxin subunit B from Escherichia coli.